Reading from the N-terminus, the 500-residue chain is L-arabinose isomerase (500 aa).

4 residues coordinate Mn(2+): Glu306, Glu333, His350, and His450.

Belongs to the arabinose isomerase family. As to quaternary structure, homohexamer. Requires Mn(2+) as cofactor.

The enzyme catalyses beta-L-arabinopyranose = L-ribulose. Its pathway is carbohydrate degradation; L-arabinose degradation via L-ribulose; D-xylulose 5-phosphate from L-arabinose (bacterial route): step 1/3. Catalyzes the conversion of L-arabinose to L-ribulose. The polypeptide is L-arabinose isomerase (Salmonella arizonae (strain ATCC BAA-731 / CDC346-86 / RSK2980)).